The primary structure comprises 83 residues: Putative cytochrome b5 B11H24.095 (83 aa).

The Cytochrome b5 heme-binding domain occupies 2–78; that stretch reads SQTFTKSQVA…GTKLKVGTLA (77 aa). Heme-binding residues include H37 and H60.

The protein belongs to the cytochrome b5 family.

This chain is Putative cytochrome b5 B11H24.095, found in Neurospora crassa (strain ATCC 24698 / 74-OR23-1A / CBS 708.71 / DSM 1257 / FGSC 987).